Here is a 570-residue protein sequence, read N- to C-terminus: Sulfite reductase [NADPH] hemoprotein beta-component 1 (570 aa).

Cysteine 434, cysteine 440, cysteine 479, and cysteine 483 together coordinate [4Fe-4S] cluster. Cysteine 483 provides a ligand contact to siroheme.

This sequence belongs to the nitrite and sulfite reductase 4Fe-4S domain family. In terms of assembly, alpha(8)-beta(8). The alpha component is a flavoprotein, the beta component is a hemoprotein. Requires siroheme as cofactor. The cofactor is [4Fe-4S] cluster.

It carries out the reaction hydrogen sulfide + 3 NADP(+) + 3 H2O = sulfite + 3 NADPH + 4 H(+). Its pathway is sulfur metabolism; hydrogen sulfide biosynthesis; hydrogen sulfide from sulfite (NADPH route): step 1/1. Component of the sulfite reductase complex that catalyzes the 6-electron reduction of sulfite to sulfide. This is one of several activities required for the biosynthesis of L-cysteine from sulfate. The sequence is that of Sulfite reductase [NADPH] hemoprotein beta-component 1 from Klebsiella pneumoniae (strain 342).